Consider the following 165-residue polypeptide: V-type proton ATPase 16 kDa proteolipid subunit (165 aa).

Residues methionine 1 to threonine 10 are Lumenal-facing. Residues alanine 11–glycine 33 traverse the membrane as a helical segment. Residues threonine 34 to serine 55 lie on the Cytoplasmic side of the membrane. A helical membrane pass occupies residues isoleucine 56–isoleucine 76. Topologically, residues serine 77–histidine 95 are lumenal. Residues leucine 96–glycine 117 traverse the membrane as a helical segment. Topologically, residues aspartate 118 to lysine 129 are cytoplasmic. The chain crosses the membrane as a helical span at residues leucine 130–leucine 155. Residues serine 156–glutamate 165 lie on the Lumenal side of the membrane.

The protein belongs to the V-ATPase proteolipid subunit family. In terms of assembly, V-ATPase is a heteromultimeric enzyme composed of a peripheral catalytic V1 complex (main components: subunits A, B, C, D, E, and F) attached to an integral membrane V0 proton pore complex (main component: the proteolipid protein; which is present as a hexamer that forms the proton-conducting pore).

It localises to the vacuole membrane. Its function is as follows. Proton-conducting pore forming subunit of the membrane integral V0 complex of vacuolar ATPase. V-ATPase is responsible for acidifying a variety of intracellular compartments in eukaryotic cells. In Gossypium hirsutum (Upland cotton), this protein is V-type proton ATPase 16 kDa proteolipid subunit (CVA16-2).